Consider the following 89-residue polypeptide: Small ribosomal subunit protein uS15 (89 aa).

The interval 1–23 (MSLGTEEKQNLINTHQVHPTDTG) is disordered. The segment covering 10–23 (NLINTHQVHPTDTG) has biased composition (polar residues).

The protein belongs to the universal ribosomal protein uS15 family. As to quaternary structure, part of the 30S ribosomal subunit. Forms a bridge to the 50S subunit in the 70S ribosome, contacting the 23S rRNA.

One of the primary rRNA binding proteins, it binds directly to 16S rRNA where it helps nucleate assembly of the platform of the 30S subunit by binding and bridging several RNA helices of the 16S rRNA. Functionally, forms an intersubunit bridge (bridge B4) with the 23S rRNA of the 50S subunit in the ribosome. In Prochlorococcus marinus (strain NATL2A), this protein is Small ribosomal subunit protein uS15.